Reading from the N-terminus, the 781-residue chain is Mitochondrial inner membrane m-AAA protease component paraplegin (781 aa).

The transit peptide at 1 to 43 directs the protein to the mitochondrion; it reads MAAALLLLRALRQSPEPGPWRLWAQLSGRSPGLFSGAGGRRPY. Positions 44 to 105 are cleaved as a propeptide — removed in mature form; the sequence is VVRGTPIGLA…GSTLYFNTSG (62 aa). Positions 105 to 134 are disordered; the sequence is GLKQKNKDDDKPKGKAPEDDEEERRRKERE. The Mitochondrial matrix portion of the chain corresponds to 106–144; sequence LKQKNKDDDKPKGKAPEDDEEERRRKEREDQMYRERLRT. The segment covering 109-134 has biased composition (basic and acidic residues); that stretch reads KNKDDDKPKGKAPEDDEEERRRKERE. Residues 145-165 form a helical membrane-spanning segment; that stretch reads LFIIAIVMSLLNSLSTSGGSI. At 166 to 248 the chain is on the mitochondrial intermembrane side; the sequence is SWADFVNEML…DRIPVSYKRT (83 aa). The chain crosses the membrane as a helical span at residues 249–269; the sequence is GFFGNALYALGMTAVGLAILW. At 270-781 the chain is on the mitochondrial matrix side; the sequence is YVFRLAGMTG…ASGEEEAPAP (512 aa). Positions 312, 352, 353, 354, 355, 356, and 357 each coordinate ATP. A 3'-nitrotyrosine modification is found at Y505. H574 lines the Zn(2+) pocket. E575 is an active-site residue. Positions 578 and 650 each coordinate Zn(2+). The interaction with PPIF stretch occupies residues 701–781; sequence HEARLLVARA…ASGEEEAPAP (81 aa).

It in the N-terminal section; belongs to the AAA ATPase family. In the C-terminal section; belongs to the peptidase M41 family. Forms heterooligomers with AFG3L2; the m-AAA protease is composed of heterohexamers of AFG3L2 and SPG7. Component of the mitochondrial permeability transition pore complex (mPTPC), at least composed of SPG7, VDAC1 and PPIF. Interacts with MAIP1. Zn(2+) serves as cofactor. In terms of processing, upon import into the mitochondrion, the N-terminal transit peptide is cleaved by the mitochondrial-processing peptidase (MPP) to generate an intermediate form which undergoes a second proteolytic cleavage mediated by proteases AFG3L2 removing an additional N-terminal fragment to generate the proteolytically active mature form.

The protein localises to the mitochondrion inner membrane. It catalyses the reaction ATP + H2O = ADP + phosphate + H(+). In terms of biological role, catalytic component of the m-AAA protease, a protease that plays a key role in proteostasis of inner mitochondrial membrane proteins, and which is essential for axonal and neuron development. SPG7 possesses both ATPase and protease activities: the ATPase activity is required to unfold substrates, threading them into the internal proteolytic cavity for hydrolysis into small peptide fragments. The m-AAA protease exerts a dual role in the mitochondrial inner membrane: it mediates the processing of specific regulatory proteins and ensures protein quality control by degrading misfolded polypeptides. Mediates protein maturation of the mitochondrial ribosomal subunit MRPL32/bL32m by catalyzing the cleavage of the presequence of MRPL32/bL32m prior to assembly into the mitochondrial ribosome. Acts as a regulator of calcium in neurons by mediating degradation of SMDT1/EMRE before its assembly with the uniporter complex, limiting the availability of SMDT1/EMRE for MCU assembly and promoting efficient assembly of gatekeeper subunits with MCU. Also regulates mitochondrial calcium by catalyzing degradation of MCU. Plays a role in the formation and regulation of the mitochondrial permeability transition pore (mPTP) and its proteolytic activity is dispensable for this function. This Rattus norvegicus (Rat) protein is Mitochondrial inner membrane m-AAA protease component paraplegin (Spg7).